Here is a 201-residue protein sequence, read N- to C-terminus: Ras-related protein Ral-a (201 aa).

GTP is bound at residue 18 to 25; it reads GSGGVGKS. Positions 40–48 match the Effector region motif; sequence YEPTKADSY. Residues 65–69 and 124–127 contribute to the GTP site; these read DTAGQ and NKCD. Cys198 bears the Cysteine methyl ester mark. The S-geranylgeranyl cysteine moiety is linked to residue Cys198. Residues 199-201 constitute a propeptide, removed in mature form; the sequence is TLL.

It belongs to the small GTPase superfamily. Ras family.

Its subcellular location is the cell membrane. It is found in the cleavage furrow. The protein resides in the midbody. The protein localises to the midbody ring. The catalysed reaction is GTP + H2O = GDP + phosphate + H(+). The sequence is that of Ras-related protein Ral-a (Rala) from Drosophila melanogaster (Fruit fly).